Reading from the N-terminus, the 346-residue chain is GTP-binding RHO-like protein (346 aa).

The segment covering 1–10 (MTPNGSRRHS) has biased composition (basic residues). The tract at residues 1 to 25 (MTPNGSRRHSAYMGSPRSQHSSTME) is disordered. Positions 16–25 (PRSQHSSTME) are enriched in polar residues. A GTP-binding site is contributed by 82–89 (GDGGCGKT). The Effector region motif lies at 104 to 112 (YVPTVFENY). GTP is bound by residues 130 to 134 (DTAGQ) and 188 to 191 (TKSD). Residues 259–294 (LGGSNGGSGNHSRHHSRNYSNVSNNRRGHLKNTSYD) form a disordered region. The residue at position 343 (Cys-343) is a Cysteine methyl ester. A lipid anchor (S-geranylgeranyl cysteine) is attached at Cys-343. The propeptide at 344 to 346 (VIL) is removed in mature form.

Belongs to the small GTPase superfamily. Rho family.

Its subcellular location is the cell membrane. This is GTP-binding RHO-like protein (CRL1) from Candida albicans (strain WO-1) (Yeast).